The sequence spans 1124 residues: Tyrosine-protein kinase JAK3 (1124 aa).

Residues M1–R223 form an interaction with cytokine/interferon/growth hormone receptors region. Phosphoserine is present on S17. Positions G24–Q356 constitute an FERM domain. The SH2; atypical domain maps to Q375 to C475. One can recognise a Protein kinase 1 domain in the interval L521–I781. A Phosphotyrosine; by autocatalysis modification is found at Y785. In terms of domain architecture, Protein kinase 2 spans L822–T1111. ATP-binding positions include L828–V836 and K855. Residues Y904 and Y939 each carry the phosphotyrosine modification. D949 (proton acceptor) is an active-site residue. Residues Y980 and Y981 each carry the phosphotyrosine; by autocatalysis modification.

Belongs to the protein kinase superfamily. Tyr protein kinase family. JAK subfamily. In terms of assembly, interacts with STAM2 and MYO18A. Interacts with SHB. Interacts with CD69. Tyrosine phosphorylated in response to IL-2 and IL-4. Dephosphorylation of Tyr-980 and Tyr-981 by PTPN2 negatively regulates cytokine-mediated signaling. In NK cells and an NK-like cell line but not in resting T-cells or in other tissues. The S-form is more commonly seen in hematopoietic lines, whereas the B-form is detected in cells both of hematopoietic and epithelial origins.

Its subcellular location is the endomembrane system. The protein resides in the cytoplasm. The enzyme catalyses L-tyrosyl-[protein] + ATP = O-phospho-L-tyrosyl-[protein] + ADP + H(+). In terms of biological role, non-receptor tyrosine kinase involved in various processes such as cell growth, development, or differentiation. Mediates essential signaling events in both innate and adaptive immunity and plays a crucial role in hematopoiesis during T-cells development. In the cytoplasm, plays a pivotal role in signal transduction via its association with type I receptors sharing the common subunit gamma such as IL2R, IL4R, IL7R, IL9R, IL15R and IL21R. Following ligand binding to cell surface receptors, phosphorylates specific tyrosine residues on the cytoplasmic tails of the receptor, creating docking sites for STATs proteins. Subsequently, phosphorylates the STATs proteins once they are recruited to the receptor. Phosphorylated STATs then form homodimer or heterodimers and translocate to the nucleus to activate gene transcription. For example, upon IL2R activation by IL2, JAK1 and JAK3 molecules bind to IL2R beta (IL2RB) and gamma chain (IL2RG) subunits inducing the tyrosine phosphorylation of both receptor subunits on their cytoplasmic domain. Then, STAT5A and STAT5B are recruited, phosphorylated and activated by JAK1 and JAK3. Once activated, dimerized STAT5 translocates to the nucleus and promotes the transcription of specific target genes in a cytokine-specific fashion. The protein is Tyrosine-protein kinase JAK3 of Homo sapiens (Human).